Here is a 269-residue protein sequence, read N- to C-terminus: Glutamate racemase (269 aa).

Substrate is bound by residues 13–14 (DS) and 45–46 (YS). Cysteine 77 functions as the Proton donor/acceptor in the catalytic mechanism. 78-79 (NT) provides a ligand contact to substrate. The active-site Proton donor/acceptor is cysteine 188. 189–190 (TH) serves as a coordination point for substrate.

It belongs to the aspartate/glutamate racemases family.

The catalysed reaction is L-glutamate = D-glutamate. The protein operates within cell wall biogenesis; peptidoglycan biosynthesis. In terms of biological role, provides the (R)-glutamate required for cell wall biosynthesis. The protein is Glutamate racemase of Pasteurella multocida (strain Pm70).